A 251-amino-acid chain; its full sequence is Imidazole glycerol phosphate synthase subunit HisF (251 aa).

Residues aspartate 11 and aspartate 130 contribute to the active site.

It belongs to the HisA/HisF family. Heterodimer of HisH and HisF.

It is found in the cytoplasm. The enzyme catalyses 5-[(5-phospho-1-deoxy-D-ribulos-1-ylimino)methylamino]-1-(5-phospho-beta-D-ribosyl)imidazole-4-carboxamide + L-glutamine = D-erythro-1-(imidazol-4-yl)glycerol 3-phosphate + 5-amino-1-(5-phospho-beta-D-ribosyl)imidazole-4-carboxamide + L-glutamate + H(+). It participates in amino-acid biosynthesis; L-histidine biosynthesis; L-histidine from 5-phospho-alpha-D-ribose 1-diphosphate: step 5/9. In terms of biological role, IGPS catalyzes the conversion of PRFAR and glutamine to IGP, AICAR and glutamate. The HisF subunit catalyzes the cyclization activity that produces IGP and AICAR from PRFAR using the ammonia provided by the HisH subunit. The polypeptide is Imidazole glycerol phosphate synthase subunit HisF (Chlorobium phaeobacteroides (strain BS1)).